A 393-amino-acid polypeptide reads, in one-letter code: Interferon regulatory factor 9 (393 aa).

A DNA-binding region (IRF tryptophan pentad repeat) is located at residues 9 to 116; that stretch reads TRKLRNWVVE…EPYKVYQLLP (108 aa). 2 disordered regions span residues 120 to 151 and 163 to 202; these read VSGQPGTQKVPSKRQHSSVSSERKEEEDAMQN and LNNEEEGASGGAVHSDIGSSSSSSSPEPQEVTDTTEAPFQ. At serine 139 the chain carries Phosphoserine.

The protein belongs to the IRF family. Interacts with STAT2 in the cytoplasm. Forms the interferon-stimulated gene factor 3 complex (ISGF3) with the heterodimer STAT1:STAT2; upon stimulation. In terms of assembly, (Microbial infection) Interacts with measles virus V protein; this interaction prevents the binding of IRF9 to STAT2 and thereby the type I interferon signaling pathway. In terms of processing, (Microbial infection) Ubiquitinated by Herpes simplex virus 2 E3 ubiquitin ligase ICP22.

It is found in the cytoplasm. The protein resides in the nucleus. Transcription factor that plays an essential role in anti-viral immunity. It mediates signaling by type I IFNs (IFN-alpha and IFN-beta). Following type I IFN binding to cell surface receptors, Jak kinases (TYK2 and JAK1) are activated, leading to tyrosine phosphorylation of STAT1 and STAT2. IRF9/ISGF3G associates with the phosphorylated STAT1:STAT2 dimer to form a complex termed ISGF3 transcription factor, that enters the nucleus. ISGF3 binds to the IFN stimulated response element (ISRE) to activate the transcription of interferon stimulated genes, which drive the cell in an antiviral state. In Homo sapiens (Human), this protein is Interferon regulatory factor 9 (IRF9).